Reading from the N-terminus, the 186-residue chain is MQDNVIIDTSIFTNPNIYKSISLEQPIDAIEAFIGLTHKSSKKIYMPRTVYIELCKVVDLESIKSRFESSIIIKSPNRCNITINALALFDFVEDMRIRINKGLRIAEEFARDKTQDIQNTISKLREKYKEALRQGTLDSKEDVDVILLALELNGVILSGDEGINSWADKFGIRTVNPLFIQEFLSF.

The protein belongs to the HARP family.

The enzyme catalyses Endonucleolytic cleavage of RNA, removing 5'-extranucleotides from tRNA precursor.. In terms of biological role, RNA-free RNase P that catalyzes the removal of the 5'-leader sequence from pre-tRNA to produce the mature 5'-terminus. In Hydrogenobaculum sp. (strain Y04AAS1), this protein is RNA-free ribonuclease P.